The following is a 292-amino-acid chain: Protease HtpX (292 aa).

The next 2 membrane-spanning stretches (helical) occupy residues 5 to 25 (VVLFLLTNFAVLILAGIVMSV) and 34 to 54 (SGLLVMAAIFGFGGSFISLLL). Zn(2+) is bound at residue His140. Glu141 is a catalytic residue. Residue His144 coordinates Zn(2+). The next 2 membrane-spanning stretches (helical) occupy residues 155–175 (LLQGVLNTFVIVLARVVGGII) and 193–213 (IIVFVLEMVFGLFATMIAMWF). Position 218 (Glu218) interacts with Zn(2+).

Belongs to the peptidase M48B family. It depends on Zn(2+) as a cofactor.

Its subcellular location is the cell inner membrane. The protein is Protease HtpX of Xanthomonas campestris pv. campestris (strain B100).